Reading from the N-terminus, the 172-residue chain is MNRAEKREFVTWLNEAFRKSGSVIVAHYSGLTVSQMNDLRSKMSEAGGAIKVAKNRLAKIALQGTESESIVDLFSGQTLIAYSEDPITAPKVAVDFAKTNDKFVILGGSMGATSLSVDAVKSLASLPSLNELRAKLVGMISTPATRIAQVVNAPAGQVVRVIGAYAQEGKAA.

The protein belongs to the universal ribosomal protein uL10 family. Part of the ribosomal stalk of the 50S ribosomal subunit. The N-terminus interacts with L11 and the large rRNA to form the base of the stalk. The C-terminus forms an elongated spine to which L12 dimers bind in a sequential fashion forming a multimeric L10(L12)X complex.

Functionally, forms part of the ribosomal stalk, playing a central role in the interaction of the ribosome with GTP-bound translation factors. This chain is Large ribosomal subunit protein uL10, found in Bartonella henselae (strain ATCC 49882 / DSM 28221 / CCUG 30454 / Houston 1) (Rochalimaea henselae).